The primary structure comprises 531 residues: SWI/SNF-related matrix-associated actin-dependent regulator of chromatin subfamily D member 2 (531 aa).

Residues 20-85 are disordered; sequence AVAAALGAPP…MSPGSRMPMA (66 aa). The segment covering 34–45 has biased composition (low complexity); sequence PGMLPSPALRGP. 2 positions are modified to asymmetric dimethylarginine: R81 and R104. Position 203 is a phosphoserine (S203). The segment at 205 to 226 is disordered; that stretch reads SKADGDNAGTAGTPGGTPAADK. Residues 210-225 show a composition bias toward low complexity; the sequence is DNAGTAGTPGGTPAAD. Phosphothreonine is present on T217. A Glycyl lysine isopeptide (Lys-Gly) (interchain with G-Cter in SUMO2) cross-link involves residue K226. One can recognise an SWIB/MDM2 domain in the interval 306–383; sequence HQPPQYKLDP…PMKLAGLLQH (78 aa).

It belongs to the SMARCD family. Component of the multiprotein chromatin-remodeling complexes SWI/SNF: SWI/SNF-A (BAF), SWI/SNF-B (PBAF) and related complexes. The canonical complex contains a catalytic subunit (either SMARCA4/BRG1/BAF190A or SMARCA2/BRM/BAF190B), and at least SMARCE1, ACTL6A/BAF53, SMARCC1/BAF155, SMARCC2/BAF170, and SMARCB1/SNF5/BAF47. Other subunits specific to each of the complexes may also be present permitting several possible combinations developmentally and tissue specific. Component of the BAF complex, which includes at least actin (ACTB), ARID1A/BAF250A, ARID1B/BAF250B, SMARCA2/BRM, SMARCA4/BRG1, ACTL6A/BAF53, ACTL6B/BAF53B, SMARCE1/BAF57, SMARCC1/BAF155, SMARCC2/BAF170, SMARCB1/SNF5/INI1, and one or more SMARCD1/BAF60A, SMARCD2/BAF60B, or SMARCD3/BAF60C. In muscle cells, the BAF complex also contains DPF3. Component of the SWI/SNF-B (PBAF) chromatin remodeling complex, at least composed of SMARCA4/BRG1, SMARCB1/BAF47/SNF5, ACTL6A/BAF53A or ACTL6B/BAF53B, SMARCE1/BAF57, SMARCD1/BAF60A, SMARCD2/BAF60B, perhaps SMARCD3/BAF60C, SMARCC1/BAF155, SMARCC2/BAF170, PBRM1/BAF180, ARID2/BAF200 and actin (ACTB). Interacts with UNKL. Interacts with CEBPE. Ubiquitinated through a signaling process involving RAC1 and the RING finger protein UNKL.

Its subcellular location is the nucleus. In terms of biological role, involved in transcriptional activation and repression of select genes by chromatin remodeling (alteration of DNA-nucleosome topology). Component of SWI/SNF chromatin remodeling complexes that carry out key enzymatic activities, changing chromatin structure by altering DNA-histone contacts within a nucleosome in an ATP-dependent manner. Critical regulator of myeloid differentiation, controlling granulocytopoiesis and the expression of genes involved in neutrophil granule formation. This chain is SWI/SNF-related matrix-associated actin-dependent regulator of chromatin subfamily D member 2 (Smarcd2), found in Mus musculus (Mouse).